A 308-amino-acid polypeptide reads, in one-letter code: Acetaldehyde dehydrogenase (308 aa).

Threonine 14–isoleucine 17 contributes to the NAD(+) binding site. Cysteine 129 acts as the Acyl-thioester intermediate in catalysis. NAD(+)-binding positions include serine 160–asparagine 168 and asparagine 280.

It belongs to the acetaldehyde dehydrogenase family.

The catalysed reaction is acetaldehyde + NAD(+) + CoA = acetyl-CoA + NADH + H(+). The polypeptide is Acetaldehyde dehydrogenase (Thermomicrobium roseum (strain ATCC 27502 / DSM 5159 / P-2)).